A 62-amino-acid polypeptide reads, in one-letter code: Sperm protamine P1 (62 aa).

The tract at residues 1-62 (MARYRRHSRS…RYSRRGRRRY (62 aa)) is disordered.

Belongs to the protamine P1 family. Testis.

The protein localises to the nucleus. It localises to the chromosome. Functionally, protamines substitute for histones in the chromatin of sperm during the haploid phase of spermatogenesis. They compact sperm DNA into a highly condensed, stable and inactive complex. The sequence is that of Sperm protamine P1 (PRM1) from Neophascogale lorentzii (Long-clawed marsupial mouse).